The chain runs to 361 residues: Inhibin alpha chain (361 aa).

A signal peptide spans 1-21 (MLPLLLPLQLLLLMVMKGGHG). Positions 22 to 64 (CQGPELDRELVLAKVRALVLDALGPPNASKDGGKPVAQRLTRR) are excised as a propeptide. The interval 45–82 (GPPNASKDGGKPVAQRLTRRHAHTGGSTRRSMENEDED) is disordered. N-linked (GlcNAc...) asparagine glycosylation is found at Asn-48, Asn-144, and Asn-266. A propeptide spans 65 to 230 (HAHTGGSTRR…PPSVGERARR (166 aa)) (inhibin alpha N-terminal region). Disulfide bonds link Cys-260–Cys-323, Cys-289–Cys-358, and Cys-293–Cys-360.

Belongs to the TGF-beta family. Dimeric, linked by one or more disulfide bonds. Activin B is a dimer of alpha and beta-B. Inhibin A is a dimer of alpha and beta-A. Inhibin B is a dimer of alpha and beta-B. Interacts with TGFBR3L; this interaction regulates female fertility. Post-translationally, proteolytic processing yields a number of bioactive forms, consisting either solely of the mature alpha chain, of the most N-terminal propeptide linked through a disulfide bond to the mature alpha chain, or of the entire proprotein.

Its subcellular location is the secreted. In terms of biological role, inhibins and activins inhibit and activate, respectively, the secretion of follitropin by the pituitary gland. Inhibins/activins are involved in regulating a number of diverse functions such as hypothalamic and pituitary hormone secretion, gonadal hormone secretion, germ cell development and maturation, erythroid differentiation, insulin secretion, nerve cell survival, embryonic axial development or bone growth, depending on their subunit composition. Inhibins appear to oppose the functions of activins. Its function is as follows. Inhibin A is a dimer of alpha/INHA and beta-A/INHBA that functions as a feedback regulator in the hypothalamic-pituitary-gonadal (HPG) axis. Inhibits the secretion of FSH from the anterior pituitary gland by acting on pituitary gonadotrope cells. Antagonizes activin A by binding to the proteoglycan, betaglycan, and forming a stable complex with and, thereby, sequestering type II activin receptors while excluding type I receptor. Inhibin B is a dimer of alpha and beta-B that plays a crucial role in the regulation of the reproductive system by inhibiting the secretion of follicle-stimulating hormone (FSH) from the anterior pituitary gland. Thereby, maintains reproductive homeostasis in both males and females. Acts as a more potent suppressor of FSH release than inhibin A. Functions as competitive receptor antagonist binding activin type II receptors with high affinity in the presence of the TGF-beta type III coreceptor/TGFBR3L. The sequence is that of Inhibin alpha chain (INHA) from Trichosurus vulpecula (Brush-tailed possum).